A 140-amino-acid polypeptide reads, in one-letter code: Large ribosomal subunit protein uL11 (140 aa).

The protein belongs to the universal ribosomal protein uL11 family. As to quaternary structure, part of the ribosomal stalk of the 50S ribosomal subunit. Interacts with L10 and the large rRNA to form the base of the stalk. L10 forms an elongated spine to which L12 dimers bind in a sequential fashion forming a multimeric L10(L12)X complex. In terms of processing, one or more lysine residues are methylated.

Its function is as follows. Forms part of the ribosomal stalk which helps the ribosome interact with GTP-bound translation factors. In Heliobacterium modesticaldum (strain ATCC 51547 / Ice1), this protein is Large ribosomal subunit protein uL11.